Reading from the N-terminus, the 202-residue chain is IMP cyclohydrolase (202 aa).

The protein belongs to the archaeal IMP cyclohydrolase family.

It catalyses the reaction IMP + H2O = 5-formamido-1-(5-phospho-D-ribosyl)imidazole-4-carboxamide. Its pathway is purine metabolism; IMP biosynthesis via de novo pathway; IMP from 5-formamido-1-(5-phospho-D-ribosyl)imidazole-4-carboxamide: step 1/1. Functionally, catalyzes the cyclization of 5-formylamidoimidazole-4-carboxamide ribonucleotide to IMP. The chain is IMP cyclohydrolase from Methanothermobacter thermautotrophicus (strain ATCC 29096 / DSM 1053 / JCM 10044 / NBRC 100330 / Delta H) (Methanobacterium thermoautotrophicum).